Here is a 230-residue protein sequence, read N- to C-terminus: Protein GrpE (230 aa).

2 disordered regions span residues 1-26 (MADE…DREA) and 209-230 (GVSK…EDNA). Positions 221-230 (NGASTSEDNA) are enriched in polar residues.

It belongs to the GrpE family. As to quaternary structure, homodimer.

It is found in the cytoplasm. Functionally, participates actively in the response to hyperosmotic and heat shock by preventing the aggregation of stress-denatured proteins, in association with DnaK and GrpE. It is the nucleotide exchange factor for DnaK and may function as a thermosensor. Unfolded proteins bind initially to DnaJ; upon interaction with the DnaJ-bound protein, DnaK hydrolyzes its bound ATP, resulting in the formation of a stable complex. GrpE releases ADP from DnaK; ATP binding to DnaK triggers the release of the substrate protein, thus completing the reaction cycle. Several rounds of ATP-dependent interactions between DnaJ, DnaK and GrpE are required for fully efficient folding. This chain is Protein GrpE, found in Brucella suis biovar 1 (strain 1330).